Consider the following 395-residue polypeptide: Elongation factor Ts, mitochondrial (395 aa).

A mitochondrion-targeting transit peptide spans 1 to 63 (MAFARAVRRP…RGFGNFIRSF (63 aa)).

It belongs to the EF-Ts family.

Its subcellular location is the mitochondrion. Associates with the EF-Tu.GDP complex and induces the exchange of GDP to GTP. It remains bound to the aminoacyl-tRNA.EF-Tu.GTP complex up to the GTP hydrolysis stage on the ribosome. This Arabidopsis thaliana (Mouse-ear cress) protein is Elongation factor Ts, mitochondrial.